The following is a 194-amino-acid chain: dTTP/UTP pyrophosphatase (194 aa).

Asp-73 serves as the catalytic Proton acceptor.

Belongs to the Maf family. YhdE subfamily. It depends on a divalent metal cation as a cofactor.

Its subcellular location is the cytoplasm. The catalysed reaction is dTTP + H2O = dTMP + diphosphate + H(+). The enzyme catalyses UTP + H2O = UMP + diphosphate + H(+). In terms of biological role, nucleoside triphosphate pyrophosphatase that hydrolyzes dTTP and UTP. May have a dual role in cell division arrest and in preventing the incorporation of modified nucleotides into cellular nucleic acids. This Clostridium botulinum (strain Kyoto / Type A2) protein is dTTP/UTP pyrophosphatase.